Here is a 494-residue protein sequence, read N- to C-terminus: Metal cation symporter ZIP14 (494 aa).

The first 34 residues, 1 to 34, serve as a signal peptide directing secretion; it reads MTLRRASGCRQLTLTIGLALTLGLLQWPIGDVRG. The Extracellular portion of the chain corresponds to 35–152; the sequence is QDGASPAQVL…PTEAEVWGYG (118 aa). The helical transmembrane segment at 153–173 threads the bilayer; it reads LLCVTVISLCSLVGASVVPFM. Over 174 to 181 the chain is Cytoplasmic; that stretch reads RKTFYKRL. A helical membrane pass occupies residues 182–202; it reads LLYFIALAIGTLYSNALFQLI. The Extracellular portion of the chain corresponds to 203–219; sequence PEAFGFDPMEDYYVPKS. Residues 220–240 form a helical membrane-spanning segment; that stretch reads AVVFGGFYLFFFTEKILKMIL. Over 241–397 the chain is Cytoplasmic; it reads KPKDTGGHGH…LLNAGMSIQQ (157 aa). An HHHGHXHX-motif motif is present at residues 248 to 255; the sequence is HGHGHSHF. An XEXPHE-motif motif is present at residues 376 to 381; the sequence is EEFPHE. Residues 398-418 traverse the membrane as a helical segment; sequence ALFFNFLSACCCYLGMGFGIL. Topologically, residues 419–426 are extracellular; sequence AGNNFSPN. Residues 427–447 traverse the membrane as a helical segment; it reads WIFALAGGMFLYIALADMFPE. The Cytoplasmic segment spans residues 448–462; that stretch reads MNEVSREEEEAGGSG. Residues 463–483 traverse the membrane as a helical segment; it reads FLLTFALQNAGLLTGFAIMLV. At 484 to 494 the chain is on the extracellular side; it reads LTIYSGQIQLG.

Belongs to the ZIP transporter (TC 2.A.5) family. As to quaternary structure, homotrimer.

It localises to the cell membrane. Its subcellular location is the apical cell membrane. The protein resides in the basolateral cell membrane. It is found in the early endosome membrane. The protein localises to the late endosome membrane. It localises to the lysosome membrane. The enzyme catalyses Zn(2+)(out) + 2 hydrogencarbonate(out) = Zn(2+)(in) + 2 hydrogencarbonate(in). The catalysed reaction is Mn(2+)(out) + 2 hydrogencarbonate(out) = Mn(2+)(in) + 2 hydrogencarbonate(in). It carries out the reaction Fe(2+)(out) + 2 hydrogencarbonate(out) = Fe(2+)(in) + 2 hydrogencarbonate(in). It catalyses the reaction Cd(2+)(out) + 2 hydrogencarbonate(out) = Cd(2+)(in) + 2 hydrogencarbonate(in). In terms of biological role, broad-scope metal ion transporter with a preference for zinc uptake. Also mediates cellular uptake of nontransferrin-bound iron. Its function is as follows. Electroneutral transporter of the plasma membrane mediating the cellular uptake of the divalent metal cations zinc, manganese and iron that are important for tissue homeostasis, metabolism, development and immunity. Functions as an energy-dependent symporter, transporting through the membranes an electroneutral complex composed of a divalent metal cation and two bicarbonate anions. Beside these endogenous cellular substrates, can also import cadmium a non-essential metal which is cytotoxic and carcinogenic. The polypeptide is Metal cation symporter ZIP14 (Danio rerio (Zebrafish)).